The following is a 164-amino-acid chain: 16S rRNA aminocarboxypropyltransferase (164 aa).

4 residues coordinate S-adenosyl-L-methionine: Thr-18, Ile-66, Leu-87, and Ser-106.

This sequence belongs to the TDD superfamily. TSR3 family.

Its subcellular location is the cytoplasm. The catalysed reaction is an N(1)-methylpseudouridine in rRNA + S-adenosyl-L-methionine = N(1)-methyl-N(3)-[(3S)-3-amino-3-carboxypropyl]pseudouridine in rRNA + S-methyl-5'-thioadenosine + H(+). In terms of biological role, aminocarboxypropyltransferase that catalyzes the aminocarboxypropyl transfer on pseudouridine corresponding to position 914 in M.jannaschii 16S rRNA. It constitutes the last step in biosynthesis of the hypermodified N1-methyl-N3-(3-amino-3-carboxypropyl) pseudouridine (m1acp3-Psi). In Thermoplasma volcanium (strain ATCC 51530 / DSM 4299 / JCM 9571 / NBRC 15438 / GSS1), this protein is 16S rRNA aminocarboxypropyltransferase.